We begin with the raw amino-acid sequence, 290 residues long: GTPase Era (290 aa).

The region spanning 2–168 is the Era-type G domain; sequence KVCIISILGR…IEILKEYAYN (167 aa). The tract at residues 10-17 is G1; it reads GRPNVGKS. 10–17 contributes to the GTP binding site; it reads GRPNVGKS. Positions 36–40 are G2; that stretch reads QTTRD. The interval 57-60 is G3; the sequence is DTPG. GTP is bound by residues 57–61 and 118–121; these read DTPGI and SKID. Positions 118–121 are G4; it reads SKID. Residues 147–149 form a G5 region; sequence VSN. Residues 199 to 275 enclose the KH type-2 domain; it reads LTDELPHSIA…TLNLKVKVSN (77 aa).

Belongs to the TRAFAC class TrmE-Era-EngA-EngB-Septin-like GTPase superfamily. Era GTPase family. As to quaternary structure, monomer.

The protein localises to the cytoplasm. The protein resides in the cell membrane. An essential GTPase that binds both GDP and GTP, with rapid nucleotide exchange. Plays a role in 16S rRNA processing and 30S ribosomal subunit biogenesis and possibly also in cell cycle regulation and energy metabolism. This is GTPase Era from Mycoplasmopsis agalactiae (strain NCTC 10123 / CIP 59.7 / PG2) (Mycoplasma agalactiae).